A 387-amino-acid chain; its full sequence is Dual-specificity RNA methyltransferase RlmN (387 aa).

The Proton acceptor role is filled by glutamate 93. In terms of domain architecture, Radical SAM core spans 99–343 (EENRGTLCIS…TTVRKTRGDD (245 aa)). Residues cysteine 106 and cysteine 348 are joined by a disulfide bond. [4Fe-4S] cluster is bound by residues cysteine 113, cysteine 117, and cysteine 120. Residues 172 to 173 (GE), serine 204, 226 to 228 (SLH), and asparagine 305 contribute to the S-adenosyl-L-methionine site. Catalysis depends on cysteine 348, which acts as the S-methylcysteine intermediate.

Belongs to the radical SAM superfamily. RlmN family. Requires [4Fe-4S] cluster as cofactor.

The protein resides in the cytoplasm. The catalysed reaction is adenosine(2503) in 23S rRNA + 2 reduced [2Fe-2S]-[ferredoxin] + 2 S-adenosyl-L-methionine = 2-methyladenosine(2503) in 23S rRNA + 5'-deoxyadenosine + L-methionine + 2 oxidized [2Fe-2S]-[ferredoxin] + S-adenosyl-L-homocysteine. The enzyme catalyses adenosine(37) in tRNA + 2 reduced [2Fe-2S]-[ferredoxin] + 2 S-adenosyl-L-methionine = 2-methyladenosine(37) in tRNA + 5'-deoxyadenosine + L-methionine + 2 oxidized [2Fe-2S]-[ferredoxin] + S-adenosyl-L-homocysteine. In terms of biological role, specifically methylates position 2 of adenine 2503 in 23S rRNA and position 2 of adenine 37 in tRNAs. m2A2503 modification seems to play a crucial role in the proofreading step occurring at the peptidyl transferase center and thus would serve to optimize ribosomal fidelity. The protein is Dual-specificity RNA methyltransferase RlmN of Janthinobacterium sp. (strain Marseille) (Minibacterium massiliensis).